Here is a 185-residue protein sequence, read N- to C-terminus: Large ribosomal subunit protein uL5m (185 aa).

It belongs to the universal ribosomal protein uL5 family.

The protein localises to the mitochondrion. This is Large ribosomal subunit protein uL5m (RPL5) from Brassica napus (Rape).